Here is a 445-residue protein sequence, read N- to C-terminus: Interferon-activable protein 202 (445 aa).

Positions 1 to 27 (MSNRNLRSSTNSEFSEGQHQTPSSDSS) are enriched in polar residues. The segment at 1 to 57 (MSNRNLRSSTNSEFSEGQHQTPSSDSSGHGEDQPQASPGPNKKSHTPKKNISKGAVL) is disordered. The segment covering 42-51 (KKSHTPKKNI) has biased composition (basic residues). HIN-200 domains follow at residues 46–243 (TPKK…IKGE) and 244–441 (KLLK…MEVI). Required for homomultimerization stretches follow at residues 82-89 (MFHATVAT) and 281-288 (MFHATVAT).

Belongs to the HIN-200 family. As to quaternary structure, homomultimer; homotetramerizes (via HIN-200 domain 2), enhancing affinity for double-stranded DNA (dsDNA). Interacts (via HIN-200 domain 2) with AIM2 (via HIN-200 domain); preventing activation of the AIM2 inflammasome. Binds to several transcription factors, including NF-kappa-B p50 (NFKB1) and p65 (RELA), FOS, JUN, E2F1, E2F4, MYOD1 and myogenin. Also binds TP53/p53, the hypophosphorylated, growth-inhibitory form of the retinoblastoma protein and the p53-binding protein 1 (TP53BP1). In terms of processing, phosphorylated.

Its subcellular location is the cytoplasm. It localises to the nucleus. DNA-binding protein involved in innate immune response and has anti-inflammatory activity. Inhibits caspase activation in response to cytosolic DNA by preventing activation of the AIM2 inflammasome, probably by sequestering cytoplasmic DNA and preventing its being bound by AIM2. Also inhibits activation of the AIM2 inflammasome via a direct interaction with AIM2, which prevents the interaction between AIM2 and PYCARD and formation of the AIM2 inflammasome. Binds double-stranded DNA (dsDNA) in the cytosol. Has anti-apoptotic effects due to inhibition of the transcriptional activity of TP53/p53. Inhibits the transcriptional activity of several transcription factors, including NF-kappa-B p50 and p65, FOS, JUN, E2F1, E2F4, MYOD1 and myogenin. The polypeptide is Interferon-activable protein 202 (Mus musculus (Mouse)).